Consider the following 282-residue polypeptide: uncharacterized protein (282 aa).

To M.tuberculosis Rv2161c and Rv3079c.

This is an uncharacterized protein from Mycobacterium tuberculosis (strain CDC 1551 / Oshkosh).